Here is a 281-residue protein sequence, read N- to C-terminus: Sorbose reductase SOU1 (281 aa).

Positions 47, 74, and 119 each coordinate NADP(+). Catalysis depends on proton donor residues serine 173 and tyrosine 188. Tyrosine 188, lysine 192, isoleucine 221, and threonine 223 together coordinate NADP(+). Lysine 192 functions as the Lowers pKa of active site Tyr in the catalytic mechanism.

Belongs to the short-chain dehydrogenases/reductases (SDR) family. As to quaternary structure, homotetramer.

It carries out the reaction D-sorbitol + NADP(+) = keto-L-sorbose + NADPH + H(+). It functions in the pathway carbohydrate degradation; L-sorbose degradation. Catalyzes the NADP dependent reduction of L-sorbose to D-glucitol. Can also convert fructose to mannitol, but less efficiently. The protein is Sorbose reductase SOU1 (SOU1) of Candida albicans (strain SC5314 / ATCC MYA-2876) (Yeast).